The following is a 242-amino-acid chain: Biosynthetic peptidoglycan transglycosylase (242 aa).

A helical transmembrane segment spans residues 18 to 38 (VIMAVLCIAILYQLWMFSLVV).

It belongs to the glycosyltransferase 51 family.

It is found in the cell inner membrane. It catalyses the reaction [GlcNAc-(1-&gt;4)-Mur2Ac(oyl-L-Ala-gamma-D-Glu-L-Lys-D-Ala-D-Ala)](n)-di-trans,octa-cis-undecaprenyl diphosphate + beta-D-GlcNAc-(1-&gt;4)-Mur2Ac(oyl-L-Ala-gamma-D-Glu-L-Lys-D-Ala-D-Ala)-di-trans,octa-cis-undecaprenyl diphosphate = [GlcNAc-(1-&gt;4)-Mur2Ac(oyl-L-Ala-gamma-D-Glu-L-Lys-D-Ala-D-Ala)](n+1)-di-trans,octa-cis-undecaprenyl diphosphate + di-trans,octa-cis-undecaprenyl diphosphate + H(+). The protein operates within cell wall biogenesis; peptidoglycan biosynthesis. Its function is as follows. Peptidoglycan polymerase that catalyzes glycan chain elongation from lipid-linked precursors. This Bordetella bronchiseptica (strain ATCC BAA-588 / NCTC 13252 / RB50) (Alcaligenes bronchisepticus) protein is Biosynthetic peptidoglycan transglycosylase.